Here is a 340-residue protein sequence, read N- to C-terminus: Ketol-acid reductoisomerase (NADP(+)) (340 aa).

In terms of domain architecture, KARI N-terminal Rossmann spans 3–182 (VTMYYEEDVE…GCARVGIIET (180 aa)). Residues 26 to 29 (YGSQ), R49, S53, and 83 to 86 (DELQ) each bind NADP(+). H108 is an active-site residue. An NADP(+)-binding site is contributed by G134. Positions 183 to 328 (TFKEETEEDL…AELRKAMPFT (146 aa)) constitute a KARI C-terminal knotted domain. Residues D191, E195, E227, and E231 each coordinate Mg(2+). S252 serves as a coordination point for substrate.

The protein belongs to the ketol-acid reductoisomerase family. Mg(2+) is required as a cofactor.

It catalyses the reaction (2R)-2,3-dihydroxy-3-methylbutanoate + NADP(+) = (2S)-2-acetolactate + NADPH + H(+). It carries out the reaction (2R,3R)-2,3-dihydroxy-3-methylpentanoate + NADP(+) = (S)-2-ethyl-2-hydroxy-3-oxobutanoate + NADPH + H(+). It functions in the pathway amino-acid biosynthesis; L-isoleucine biosynthesis; L-isoleucine from 2-oxobutanoate: step 2/4. It participates in amino-acid biosynthesis; L-valine biosynthesis; L-valine from pyruvate: step 2/4. Involved in the biosynthesis of branched-chain amino acids (BCAA). Catalyzes an alkyl-migration followed by a ketol-acid reduction of (S)-2-acetolactate (S2AL) to yield (R)-2,3-dihydroxy-isovalerate. In the isomerase reaction, S2AL is rearranged via a Mg-dependent methyl migration to produce 3-hydroxy-3-methyl-2-ketobutyrate (HMKB). In the reductase reaction, this 2-ketoacid undergoes a metal-dependent reduction by NADPH to yield (R)-2,3-dihydroxy-isovalerate. This Lactococcus lactis subsp. cremoris (strain MG1363) protein is Ketol-acid reductoisomerase (NADP(+)).